The chain runs to 505 residues: Transcription factor APG (505 aa).

Disordered stretches follow at residues 1–40 (MLRG…CSAA), 61–99 (GAAN…DTAP), 119–156 (PAAA…SGGG), 169–242 (PLQQ…APTT), 256–312 (AQRL…SQDE), 324–344 (RRSA…NLSE), and 469–505 (PPPP…VKQA). The span at 23 to 33 (PLRPPPPPPFQ) shows a compositional bias: pro residues. Residues 131–144 (CSSSHGAVVPSTSA) are compositionally biased toward polar residues. Low complexity predominate over residues 174–199 (PSGGETASASASAAATSTVPVESTVV). Over residues 200 to 212 (QAATNRLRSTPLF) the composition is skewed to polar residues. Residues 222-239 (PPKPSPRAAAPPPPPPLA) show a composition bias toward pro residues. Residues 288-299 (GDRRQLNWRDSH) show a composition bias toward basic and acidic residues. A compositionally biased stretch (polar residues) spans 300-310 (NNQSAEWSASQ). Over residues 324-334 (RRSAARSSKRS) the composition is skewed to basic residues. A compositionally biased stretch (basic and acidic residues) spans 335–344 (RTAEVHNLSE). Residues 335–384 (RTAEVHNLSERRRRDRINEKMRALQELIPNCNKIDKASMLEEAIEYLKTL) enclose the bHLH domain. A compositionally biased stretch (low complexity) spans 492–505 (GAADAGNAPAVKQA).

The protein belongs to the bHLH protein family. Homodimer and heterodimer with ILI5 or ILI6.

Its subcellular location is the nucleus. Atypical bHLH transcription factor that acts as a negative regulator of grain size. Binds the transcription factor ILI6 and forms a heterodimer of antagonistic bHLH transcription factors that regulates grain length and weight by controlling cell elongation in lemma and palea. May be involved in the control of lamina inclination through brassinosteroid signaling pathway. The protein is Transcription factor APG (APG) of Oryza sativa subsp. japonica (Rice).